The sequence spans 182 residues: MGESITAPEVRLINSDGGPLGVVSRSVALRLAGEVGLDLVEVSPFSKPPVVKIMDYGKFRYEASQKAKEARRRQSGVSVKEVRFRLKICDNDYDVKLRKAISFLQAGDKVKVMILFRGREQSRPELGVKLLKKFADDISEFGSADSLSRTDGRGMAIMVSPIKSKTIVREKSSHAQKGDKQP.

This sequence belongs to the IF-3 family. In terms of assembly, monomer.

It is found in the cytoplasm. Its function is as follows. IF-3 binds to the 30S ribosomal subunit and shifts the equilibrium between 70S ribosomes and their 50S and 30S subunits in favor of the free subunits, thus enhancing the availability of 30S subunits on which protein synthesis initiation begins. In Tropheryma whipplei (strain TW08/27) (Whipple's bacillus), this protein is Translation initiation factor IF-3.